Here is a 1041-residue protein sequence, read N- to C-terminus: Serine-repeat antigen protein 6 (1041 aa).

The N-terminal stretch at 1-34 (MIFFNFKLNRMICPIFFLYIINVLFTQYFIKCEG) is a signal peptide. N84 carries an N-linked (GlcNAc...) asparagine glycan. Low complexity predominate over residues 101–111 (KVVSSSESGKG). A disordered region spans residues 101–173 (KVVSSSESGK…TESSSETLNK (73 aa)). The segment covering 114–149 (VSHTKVTSEGLSDTQPNVTQSVSSSTHTPGSLDSTM) has biased composition (polar residues). The N-linked (GlcNAc...) asparagine glycan is linked to N130. Residues 150–168 (STEQHSSVSQSSLPTESSS) are compositionally biased toward low complexity. An N-linked (GlcNAc...) asparagine glycan is attached at N459. The tract at residues 500-577 (TLPSESPSES…GDTNYVYDFD (78 aa)) is disordered. Positions 502–515 (PSESPSESSSKSDS) are enriched in low complexity. A compositionally biased stretch (basic and acidic residues) spans 521–545 (NDKDKNEDKDDMSKNSKEEFKNDDK). Residue N554 is glycosylated (N-linked (GlcNAc...) asparagine). The span at 564–574 (NINNGDTNYVY) shows a compositional bias: low complexity. A glycan (N-linked (GlcNAc...) asparagine) is linked at N583. The active site involves C654. An N-linked (GlcNAc...) asparagine glycan is attached at N684. Residues H820 and N845 contribute to the active site. Residue N984 is glycosylated (N-linked (GlcNAc...) asparagine).

It belongs to the peptidase C1 family. Post-translationally, just prior to merozoite egress from host erythrocytes, proteolytically cleaved by SUB1 to generate the active 75kDa form.

It localises to the parasitophorous vacuole lumen. Its subcellular location is the parasitophorous vacuole membrane. Its function is as follows. Cysteine protease which plays an essential role in merozoite egress from host erythrocytes. May cleave host SPTB/beta spectrin and ANK1/ankyrin-1 which disrupts host erythrocyte actin cytoskeleton and leads to host erythrocyte cell membrane rupture. The sequence is that of Serine-repeat antigen protein 6 from Plasmodium falciparum.